Reading from the N-terminus, the 241-residue chain is Uridylate kinase (241 aa).

15–18 (KLSG) is a binding site for ATP. The interval 23-28 (GTEGFG) is involved in allosteric activation by GTP. Gly-57 contributes to the UMP binding site. Residues Gly-58 and Arg-62 each coordinate ATP. UMP-binding positions include Asp-77 and 138 to 145 (TGNPFFTT). Positions 165, 171, and 174 each coordinate ATP.

Belongs to the UMP kinase family. As to quaternary structure, homohexamer.

The protein localises to the cytoplasm. The catalysed reaction is UMP + ATP = UDP + ADP. Its pathway is pyrimidine metabolism; CTP biosynthesis via de novo pathway; UDP from UMP (UMPK route): step 1/1. With respect to regulation, allosterically activated by GTP. Inhibited by UTP. Its function is as follows. Catalyzes the reversible phosphorylation of UMP to UDP. The chain is Uridylate kinase from Escherichia coli O139:H28 (strain E24377A / ETEC).